The following is a 310-amino-acid chain: HTH-type transcriptional regulator CbbR (310 aa).

In terms of domain architecture, HTH lysR-type spans 7–64; sequence ITLKQLRALVAVAGSASLTGGATRLGLTPPAIHSQIRNLEEAFGVPLLHRPPETGSFT. A DNA-binding region (H-T-H motif) is located at residues 24-43; that stretch reads LTGGATRLGLTPPAIHSQIR.

This sequence belongs to the LysR transcriptional regulatory family.

Its function is as follows. Transcriptional activator for the cbb operon for RuBisCO and other Calvin cycle genes. The sequence is that of HTH-type transcriptional regulator CbbR (cbbR) from Cereibacter sphaeroides (Rhodobacter sphaeroides).